Here is a 269-residue protein sequence, read N- to C-terminus: Formamidopyrimidine-DNA glycosylase (269 aa).

The Schiff-base intermediate with DNA role is filled by Pro2. Catalysis depends on Glu3, which acts as the Proton donor. The Proton donor; for beta-elimination activity role is filled by Lys57. Residues His90, Arg109, and Lys150 each coordinate DNA. The FPG-type zinc finger occupies 235-269 (QVYGRKGEPCRVCGTPIVATKHAQRATFYCRHCQK). Catalysis depends on Arg259, which acts as the Proton donor; for delta-elimination activity.

Belongs to the FPG family. Monomer. It depends on Zn(2+) as a cofactor.

It carries out the reaction Hydrolysis of DNA containing ring-opened 7-methylguanine residues, releasing 2,6-diamino-4-hydroxy-5-(N-methyl)formamidopyrimidine.. It catalyses the reaction 2'-deoxyribonucleotide-(2'-deoxyribose 5'-phosphate)-2'-deoxyribonucleotide-DNA = a 3'-end 2'-deoxyribonucleotide-(2,3-dehydro-2,3-deoxyribose 5'-phosphate)-DNA + a 5'-end 5'-phospho-2'-deoxyribonucleoside-DNA + H(+). Its function is as follows. Involved in base excision repair of DNA damaged by oxidation or by mutagenic agents. Acts as a DNA glycosylase that recognizes and removes damaged bases. Has a preference for oxidized purines, such as 7,8-dihydro-8-oxoguanine (8-oxoG). Has AP (apurinic/apyrimidinic) lyase activity and introduces nicks in the DNA strand. Cleaves the DNA backbone by beta-delta elimination to generate a single-strand break at the site of the removed base with both 3'- and 5'-phosphates. In Salmonella heidelberg (strain SL476), this protein is Formamidopyrimidine-DNA glycosylase.